The chain runs to 77 residues: Small nuclear ribonucleoprotein G (77 aa).

The region spanning 4 to 76 (AGAPDLKKYL…VIMIETLDKM (73 aa)) is the Sm domain.

This sequence belongs to the snRNP Sm proteins family. In terms of assembly, belongs to the 40S cdc5-associated complex (or cwf complex), a spliceosome sub-complex reminiscent of a late-stage spliceosome composed of the U2, U5 and U6 snRNAs and at least brr2, cdc5, cwf2/prp3, cwf3/syf1, cwf4/syf3, cwf5/ecm2, spp42/cwf6, cwf7/spf27, cwf8, cwf9, cwf10, cwf11, cwf12, prp45/cwf13, cwf14, cwf15, cwf16, cwf17, cwf18, cwf19, cwf20, cwf21, cwf22, cwf23, cwf24, cwf25, cwf26, cyp7/cwf27, cwf28, cwf29/ist3, lea1, msl1, prp5/cwf1, prp10, prp12/sap130, prp17, prp22, sap61, sap62, sap114, sap145, slu7, smb1, smd1, smd3, smf1, smg1 and syf2.

It is found in the nucleus. The protein localises to the cytoplasm. Functionally, plays a role in pre-mRNA splicing as a core component of the spliceosomal U1, U2, U4 and U5 small nuclear ribonucleoproteins (snRNPs), the building blocks of the spliceosome. This Schizosaccharomyces pombe (strain 972 / ATCC 24843) (Fission yeast) protein is Small nuclear ribonucleoprotein G (smg1).